The primary structure comprises 175 residues: Shikimate kinase (175 aa).

G14 to T19 serves as a coordination point for ATP. S18 contacts Mg(2+). D36, R60, and G82 together coordinate substrate. R120 is an ATP binding site. Substrate is bound at residue R140. Q157 is a binding site for ATP.

Belongs to the shikimate kinase family. As to quaternary structure, monomer. It depends on Mg(2+) as a cofactor.

It is found in the cytoplasm. The catalysed reaction is shikimate + ATP = 3-phosphoshikimate + ADP + H(+). The protein operates within metabolic intermediate biosynthesis; chorismate biosynthesis; chorismate from D-erythrose 4-phosphate and phosphoenolpyruvate: step 5/7. Functionally, catalyzes the specific phosphorylation of the 3-hydroxyl group of shikimic acid using ATP as a cosubstrate. The polypeptide is Shikimate kinase (Actinobacillus succinogenes (strain ATCC 55618 / DSM 22257 / CCUG 43843 / 130Z)).